Here is a 437-residue protein sequence, read N- to C-terminus: Transcription factor AP-2-alpha (437 aa).

Lysine 10 is covalently cross-linked (Glycyl lysine isopeptide (Lys-Gly) (interchain with G-Cter in SUMO); alternate). Residue lysine 10 forms a Glycyl lysine isopeptide (Lys-Gly) (interchain with G-Cter in SUMO2); alternate linkage. Positions 14-107 (CEDRHDGTSN…GQRQSQESGL (94 aa)) are disordered. Residues 57–62 (YFPPPY) carry the PPxY motif motif. 2 stretches are compositionally biased toward low complexity: residues 65–74 (IYPQSQDPYS) and 88–101 (QPQP…GQRQ). Residues lysine 177 and lysine 184 each participate in a glycyl lysine isopeptide (Lys-Gly) (interchain with G-Cter in SUMO2) cross-link. A Phosphoserine; by PKA modification is found at serine 239. The H-S-H (helix-span-helix), dimerization stretch occupies residues 280 to 410 (RRKAANVTLL…YLTEALKAMD (131 aa)). Over residues 414–427 (LSNNPNSHTDNSAK) the composition is skewed to polar residues. The tract at residues 414–437 (LSNNPNSHTDNSAKSSDKEEKHRK) is disordered. The span at 428-437 (SSDKEEKHRK) shows a compositional bias: basic and acidic residues.

This sequence belongs to the AP-2 family. As to quaternary structure, binds DNA as a dimer. Can form homodimers or heterodimers with other AP-2 family members. Interacts with WWOX. Interacts with UBE2I. Interacts with RALBP1 in a complex also containing EPN1 and NUMB during interphase and mitosis. Interacts with CITED4. Interacts with KCTD1; this interaction represses transcription activation. Interacts (via C-terminus) with CITED2 (via C-terminus); the interaction stimulates TFAP2A-transcriptional activation. Interacts (via N-terminus) with EP300 (via N-terminus); the interaction requires CITED2. Interacts with KCTD15; this interaction inhibits TFAP2A transcriptional activation. Post-translationally, sumoylated on Lys-10; which inhibits transcriptional activity.

The protein localises to the nucleus. Functionally, sequence-specific DNA-binding protein that interacts with inducible viral and cellular enhancer elements to regulate transcription of selected genes. AP-2 factors bind to the consensus sequence 5'-GCCNNNGGC-3' and activate genes involved in a large spectrum of important biological functions including proper eye, face, body wall, limb and neural tube development. They also suppress a number of genes including MCAM/MUC18, C/EBP alpha and MYC. AP-2-alpha is the only AP-2 protein required for early morphogenesis of the lens vesicle. Together with the CITED2 coactivator, stimulates the PITX2 P1 promoter transcription activation. Associates with chromatin to the PITX2 P1 promoter region. The protein is Transcription factor AP-2-alpha (Tfap2a) of Mus musculus (Mouse).